We begin with the raw amino-acid sequence, 171 residues long: PRA1-like protein (171 aa).

3 helical membrane-spanning segments follow: residues 67 to 87 (AIIA…LIVI), 119 to 139 (VILA…ETII), and 140 to 160 (WLVG…EPPV).

It belongs to the PRA1 family.

Its subcellular location is the membrane. The sequence is that of PRA1-like protein from Schizosaccharomyces pombe (strain 972 / ATCC 24843) (Fission yeast).